The primary structure comprises 88 residues: Small muscular protein (88 aa).

The interval 22–66 (MGAFRPGAGQPPRRKECTPEVEEGVPPTSDEEKKPIPGAKKLPGP) is disordered.

It belongs to the SMPX family. Preferentially and abundantly expressed in heart and skeletal muscle.

In terms of biological role, plays a role in the regulatory network through which muscle cells coordinate their structural and functional states during growth, adaptation, and repair. The sequence is that of Small muscular protein (SMPX) from Homo sapiens (Human).